We begin with the raw amino-acid sequence, 345 residues long: MTNLTLALDAMSGDFGPRVTVPAALQALASNPRLKLLLVGIPDIISPMLVNSDTELLSRLQLVPAERVVANDAKPSQAIRNSRGTSMRIALDLVKSGEAQACISAGNTGVLMGLSKLMLKSIEGIERPALMTVLPNLKQRQTVVLDLGANVNCDSRMLVQFAIMGSVMAEEVVGVVNPAVALLNIGTEESKGLDNIREAATILKRIPTINYIGYLEGDELLTGKSDVLVCDGFAGNVTLKTMEGAIRVILSLLKSSDGQKKKFSWLLRIVKKWLQKRMTKRFGHLNPDQYNGACLLGLYGIVIKSHGAANEHAFKAAIEQAVQAVERQVPDRIAARLETALPKSD.

It belongs to the PlsX family. Homodimer. Probably interacts with PlsY.

The protein resides in the cytoplasm. The catalysed reaction is a fatty acyl-[ACP] + phosphate = an acyl phosphate + holo-[ACP]. Its pathway is lipid metabolism; phospholipid metabolism. In terms of biological role, catalyzes the reversible formation of acyl-phosphate (acyl-PO(4)) from acyl-[acyl-carrier-protein] (acyl-ACP). This enzyme utilizes acyl-ACP as fatty acyl donor, but not acyl-CoA. This is Phosphate acyltransferase from Photorhabdus laumondii subsp. laumondii (strain DSM 15139 / CIP 105565 / TT01) (Photorhabdus luminescens subsp. laumondii).